The chain runs to 215 residues: Ribonuclease T (215 aa).

The Exonuclease domain maps to 20–194 (VVIDVETAGF…YDTERTAVLF (175 aa)). Mg(2+)-binding residues include Asp23, Glu25, His181, and Asp186. The Proton donor/acceptor role is filled by His181.

It belongs to the RNase T family. In terms of assembly, homodimer. Mg(2+) serves as cofactor.

Trims short 3' overhangs of a variety of RNA species, leaving a one or two nucleotide 3' overhang. Responsible for the end-turnover of tRNA: specifically removes the terminal AMP residue from uncharged tRNA (tRNA-C-C-A). Also appears to be involved in tRNA biosynthesis. The sequence is that of Ribonuclease T from Shigella dysenteriae serotype 1 (strain Sd197).